The primary structure comprises 316 residues: Ornithine carbamoyltransferase (316 aa).

Residues 57–60, glutamine 84, arginine 108, and 135–138 contribute to the carbamoyl phosphate site; these read STRT and HPCQ. Residues asparagine 166, aspartate 230, and 234–235 each bind L-ornithine; that span reads SM. Residues 269–270 and arginine 297 contribute to the carbamoyl phosphate site; that span reads CL.

It belongs to the aspartate/ornithine carbamoyltransferase superfamily. OTCase family.

Its subcellular location is the cytoplasm. The enzyme catalyses carbamoyl phosphate + L-ornithine = L-citrulline + phosphate + H(+). It functions in the pathway amino-acid biosynthesis; L-arginine biosynthesis; L-arginine from L-ornithine and carbamoyl phosphate: step 1/3. Reversibly catalyzes the transfer of the carbamoyl group from carbamoyl phosphate (CP) to the N(epsilon) atom of ornithine (ORN) to produce L-citrulline. This chain is Ornithine carbamoyltransferase, found in Bacillus thuringiensis subsp. konkukian (strain 97-27).